The following is a 380-amino-acid chain: Two-component response regulator ORR28 (380 aa).

The region spanning Ser13–Asp130 is the Response regulatory domain. Asp65 bears the 4-aspartylphosphate mark. Residues Arg169 to Lys223 constitute a DNA-binding region (myb-like GARP). The segment at Leu225–Asn245 is disordered. Polar residues predominate over residues Ala228 to Asn245.

Belongs to the ARR family. Type-B subfamily. Post-translationally, two-component system major event consists of a His-to-Asp phosphorelay between a sensor histidine kinase (HK) and a response regulator (RR). In plants, the His-to-Asp phosphorelay involves an additional intermediate named Histidine-containing phosphotransfer protein (HPt). This multistep phosphorelay consists of a His-Asp-His-Asp sequential transfer of a phosphate group between first a His and an Asp of the HK protein, followed by the transfer to a conserved His of the HPt protein and finally the transfer to an Asp in the receiver domain of the RR protein.

The protein resides in the nucleus. Functionally, transcriptional activator that binds specific DNA sequence. Functions as a response regulator involved in His-to-Asp phosphorelay signal transduction system. Phosphorylation of the Asp residue in the receiver domain activates the ability of the protein to promote the transcription of target genes. May directly activate some type-A response regulators in response to cytokinins. In Oryza sativa subsp. indica (Rice), this protein is Two-component response regulator ORR28.